A 354-amino-acid chain; its full sequence is Protein RecA (354 aa).

75–82 lines the ATP pocket; that stretch reads GPESSGKT.

The protein belongs to the RecA family.

It is found in the cytoplasm. Its function is as follows. Can catalyze the hydrolysis of ATP in the presence of single-stranded DNA, the ATP-dependent uptake of single-stranded DNA by duplex DNA, and the ATP-dependent hybridization of homologous single-stranded DNAs. It interacts with LexA causing its activation and leading to its autocatalytic cleavage. This is Protein RecA from Cupriavidus taiwanensis (strain DSM 17343 / BCRC 17206 / CCUG 44338 / CIP 107171 / LMG 19424 / R1) (Ralstonia taiwanensis (strain LMG 19424)).